The following is a 134-amino-acid chain: Retinol-binding protein 2 (134 aa).

Residues K41 and Q109 each coordinate all-trans-retinol.

It belongs to the calycin superfamily. Fatty-acid binding protein (FABP) family. In terms of tissue distribution, higher expression in adult small intestine and to a much lesser extent in fetal kidney.

It is found in the cytoplasm. Intracellular transport of retinol. This is Retinol-binding protein 2 (RBP2) from Homo sapiens (Human).